The following is a 560-amino-acid chain: DNA ligase B (560 aa).

Residue K124 is the N6-AMP-lysine intermediate of the active site.

It belongs to the NAD-dependent DNA ligase family. LigB subfamily.

The enzyme catalyses NAD(+) + (deoxyribonucleotide)n-3'-hydroxyl + 5'-phospho-(deoxyribonucleotide)m = (deoxyribonucleotide)n+m + AMP + beta-nicotinamide D-nucleotide.. Its function is as follows. Catalyzes the formation of phosphodiester linkages between 5'-phosphoryl and 3'-hydroxyl groups in double-stranded DNA using NAD as a coenzyme and as the energy source for the reaction. The polypeptide is DNA ligase B (Escherichia coli O1:K1 / APEC).